The chain runs to 508 residues: Photosystem II CP47 reaction center protein (508 aa).

The next 6 helical transmembrane spans lie at 21 to 36 (AVHL…WAGS), 101 to 115 (IILS…IWHW), 140 to 156 (GIHL…FGAF), 203 to 218 (IAAG…FHLS), 237 to 252 (VLSS…AFVV), and 457 to 472 (IFAL…HGAR).

The protein belongs to the PsbB/PsbC family. PsbB subfamily. As to quaternary structure, PSII is composed of 1 copy each of membrane proteins PsbA, PsbB, PsbC, PsbD, PsbE, PsbF, PsbH, PsbI, PsbJ, PsbK, PsbL, PsbM, PsbT, PsbY, PsbZ, Psb30/Ycf12, at least 3 peripheral proteins of the oxygen-evolving complex and a large number of cofactors. It forms dimeric complexes. It depends on Binds multiple chlorophylls. PSII binds additional chlorophylls, carotenoids and specific lipids. as a cofactor.

It localises to the plastid. The protein localises to the chloroplast thylakoid membrane. Functionally, one of the components of the core complex of photosystem II (PSII). It binds chlorophyll and helps catalyze the primary light-induced photochemical processes of PSII. PSII is a light-driven water:plastoquinone oxidoreductase, using light energy to abstract electrons from H(2)O, generating O(2) and a proton gradient subsequently used for ATP formation. In Bigelowiella natans (Pedinomonas minutissima), this protein is Photosystem II CP47 reaction center protein.